Consider the following 583-residue polypeptide: 2-succinyl-5-enolpyruvyl-6-hydroxy-3-cyclohexene-1-carboxylate synthase (583 aa).

This sequence belongs to the TPP enzyme family. MenD subfamily. Homodimer. Mg(2+) is required as a cofactor. Requires Mn(2+) as cofactor. Thiamine diphosphate serves as cofactor.

The catalysed reaction is isochorismate + 2-oxoglutarate + H(+) = 5-enolpyruvoyl-6-hydroxy-2-succinyl-cyclohex-3-ene-1-carboxylate + CO2. The protein operates within quinol/quinone metabolism; 1,4-dihydroxy-2-naphthoate biosynthesis; 1,4-dihydroxy-2-naphthoate from chorismate: step 2/7. It functions in the pathway cofactor biosynthesis; phylloquinone biosynthesis. Its function is as follows. Catalyzes the thiamine diphosphate-dependent decarboxylation of 2-oxoglutarate and the subsequent addition of the resulting succinic semialdehyde-thiamine pyrophosphate anion to isochorismate to yield 2-succinyl-5-enolpyruvyl-6-hydroxy-3-cyclohexene-1-carboxylate (SEPHCHC). This Nostoc sp. (strain PCC 7120 / SAG 25.82 / UTEX 2576) protein is 2-succinyl-5-enolpyruvyl-6-hydroxy-3-cyclohexene-1-carboxylate synthase.